A 294-amino-acid polypeptide reads, in one-letter code: 4-hydroxy-tetrahydrodipicolinate synthase (294 aa).

Pyruvate is bound at residue T44. The Proton donor/acceptor role is filled by Y132. Catalysis depends on K160, which acts as the Schiff-base intermediate with substrate. V202 contacts pyruvate.

It belongs to the DapA family. In terms of assembly, homotetramer; dimer of dimers.

The protein resides in the cytoplasm. It carries out the reaction L-aspartate 4-semialdehyde + pyruvate = (2S,4S)-4-hydroxy-2,3,4,5-tetrahydrodipicolinate + H2O + H(+). Its pathway is amino-acid biosynthesis; L-lysine biosynthesis via DAP pathway; (S)-tetrahydrodipicolinate from L-aspartate: step 3/4. In terms of biological role, catalyzes the condensation of (S)-aspartate-beta-semialdehyde [(S)-ASA] and pyruvate to 4-hydroxy-tetrahydrodipicolinate (HTPA). The sequence is that of 4-hydroxy-tetrahydrodipicolinate synthase from Leptospira borgpetersenii serovar Hardjo-bovis (strain JB197).